The chain runs to 91 residues: MSRVCELTGKGPMSGNNVSHANNKTRRRFLPNLNEVSLLSEKLGRSYQLRISAAALRSVDHRGGLDAFLAKAKDAELSDRALKIKRELAKA.

The interval 1–23 (MSRVCELTGKGPMSGNNVSHANN) is disordered.

It belongs to the bacterial ribosomal protein bL28 family.

The protein is Large ribosomal subunit protein bL28 of Paracoccus denitrificans (strain Pd 1222).